A 100-amino-acid polypeptide reads, in one-letter code: ATP synthase subunit c (100 aa).

2 consecutive transmembrane segments (helical) span residues 26–46 and 71–91; these read FSVVAAGIGLGVAALGGAIGM and MFIALAMIEAQVIYALVIALI.

The protein belongs to the ATPase C chain family. As to quaternary structure, F-type ATPases have 2 components, F(1) - the catalytic core - and F(0) - the membrane proton channel. F(1) has five subunits: alpha(3), beta(3), gamma(1), delta(1), epsilon(1). F(0) has three main subunits: a(1), b(2) and c(10-14). The alpha and beta chains form an alternating ring which encloses part of the gamma chain. F(1) is attached to F(0) by a central stalk formed by the gamma and epsilon chains, while a peripheral stalk is formed by the delta and b chains.

It localises to the cell inner membrane. Functionally, f(1)F(0) ATP synthase produces ATP from ADP in the presence of a proton or sodium gradient. F-type ATPases consist of two structural domains, F(1) containing the extramembraneous catalytic core and F(0) containing the membrane proton channel, linked together by a central stalk and a peripheral stalk. During catalysis, ATP synthesis in the catalytic domain of F(1) is coupled via a rotary mechanism of the central stalk subunits to proton translocation. In terms of biological role, key component of the F(0) channel; it plays a direct role in translocation across the membrane. A homomeric c-ring of between 10-14 subunits forms the central stalk rotor element with the F(1) delta and epsilon subunits. The sequence is that of ATP synthase subunit c from Campylobacter fetus subsp. fetus (strain 82-40).